The primary structure comprises 255 residues: Small ribosomal subunit protein uS2 (255 aa).

It belongs to the universal ribosomal protein uS2 family.

The protein is Small ribosomal subunit protein uS2 of Streptococcus uberis (strain ATCC BAA-854 / 0140J).